The primary structure comprises 122 residues: MPRIIGIDIPAKKKLKISLTYIYGIGPALSEEIIAKLQLNPEARAVELTEEEIGRLNSLLQSEYVVEGDLRRRVQSDIKRLISIHAYRGQRHRLSLPVRGQRTKTNSRTRKGKRKTVAGKKK.

A disordered region spans residues 93 to 122 (RLSLPVRGQRTKTNSRTRKGKRKTVAGKKK). Residues 101–122 (QRTKTNSRTRKGKRKTVAGKKK) show a composition bias toward basic residues.

This sequence belongs to the universal ribosomal protein uS13 family. In terms of assembly, part of the 30S ribosomal subunit. Forms a loose heterodimer with protein S19. Forms two bridges to the 50S subunit in the 70S ribosome.

Its function is as follows. Located at the top of the head of the 30S subunit, it contacts several helices of the 16S rRNA. In the 70S ribosome it contacts the 23S rRNA (bridge B1a) and protein L5 of the 50S subunit (bridge B1b), connecting the 2 subunits; these bridges are implicated in subunit movement. Contacts the tRNAs in the A and P-sites. In Chlamydia caviae (strain ATCC VR-813 / DSM 19441 / 03DC25 / GPIC) (Chlamydophila caviae), this protein is Small ribosomal subunit protein uS13.